An 86-amino-acid chain; its full sequence is YcgL domain-containing protein XCV4171 (86 aa).

The YcgL domain occupies 1–83 (MHAYVYKSQR…PKTIVLAGEC (83 aa)).

In Xanthomonas euvesicatoria pv. vesicatoria (strain 85-10) (Xanthomonas campestris pv. vesicatoria), this protein is YcgL domain-containing protein XCV4171.